The following is a 453-amino-acid chain: Phosphoglucosamine mutase (453 aa).

The Phosphoserine intermediate role is filled by S109. Residues S109, D246, D248, and D250 each contribute to the Mg(2+) site. The residue at position 109 (S109) is a Phosphoserine.

Belongs to the phosphohexose mutase family. Mg(2+) is required as a cofactor. In terms of processing, activated by phosphorylation.

It carries out the reaction alpha-D-glucosamine 1-phosphate = D-glucosamine 6-phosphate. In terms of biological role, catalyzes the conversion of glucosamine-6-phosphate to glucosamine-1-phosphate. This is Phosphoglucosamine mutase from Leifsonia xyli subsp. xyli (strain CTCB07).